The chain runs to 274 residues: UPF0173 metal-dependent hydrolase A2cp1_1196 (274 aa).

It belongs to the UPF0173 family.

The sequence is that of UPF0173 metal-dependent hydrolase A2cp1_1196 from Anaeromyxobacter dehalogenans (strain 2CP-1 / ATCC BAA-258).